A 127-amino-acid polypeptide reads, in one-letter code: Evasin P467 (127 aa).

The N-terminal stretch at 1–21 is a signal peptide; the sequence is MALKACITVIAVVYVVQVVRG. Disulfide bonds link Cys42/Cys63, Cys59/Cys100, Cys76/Cys105, and Cys95/Cys114. N-linked (GlcNAc...) asparagine glycans are attached at residues Asn49 and Asn94.

It localises to the secreted. In terms of biological role, salivary chemokine-binding protein which binds to host chemokines CCL1, CCL2, CCL3 and CCL5. The chain is Evasin P467 from Rhipicephalus pulchellus (Yellow backed tick).